An 838-amino-acid chain; its full sequence is MSFPPHLNRPPMGIPALPPGIPPPQFPGFPPPVPPGTPMIPVPMSIMAPAPTVLVPTVSMVGKHLGARKDHPGLKLKENDENCGPTTTVFVGNISEKASDMLIRQLLAKCGLVLSWKRVQGASGKLQAFGFCEYKEPESTLRALRLLHDLQIGEKKLLVKVDAKTKAQLDEWKAKKKANGNARPETVTNDDEEALDEETKRRDQMIKGAIEVLIREYSSELNAPSQESDSHPRKKKKEKKEDIFRRFPVAPLIPYPLITKEDINAIEMEEDKRDLISREISKFRDTHKKLEEEKGKKEKERQEIEKERRERERERERERERREREREREREREREKEKERERERERDRDRDRTKERDRDRERDRDRDRERSSDRNKDRSRSREKSRDREREREREREREREREREREREREREREREREREKDKKRDREEDEEDAYERRKLERKLREKEAAYQERLKNWEIRERKKTREYEKEAEREEERRREMAKEAKRLKEFLEDYDDDRDDPKYYRGSALQKRLRDREKEMEADERDRKREKEELEEIRQRLLAEGHPDPDAELQRMEQEAERRRQPQIKQEPESEEEEEEKQEKEEKREEPVEEEEEPEQKPCLKPTLRPISSAPSVSSASGNATPNTPGDESPCGIIIPHENSPDQQQPEEHRPKIGLSLKLGASNSPGQPNSVKRKKLPVDSVFNKFEDEDSDDVPRKRKLVPLDYGEDDKNATKGTVNTEEKRKHIKSLIEKIPTAKPELFAYPLDWSIVDSILMERRIRPWINKKIIEYIGEEEATLVDFVCSKVMAHSSPQSILDDVAMVLDEEAEVFIVKMWRLLIYETEAKKIGLVK.

Residues 1-30 are disordered; that stretch reads MSFPPHLNRPPMGIPALPPGIPPPQFPGFP. Pro residues predominate over residues 12 to 30; it reads MGIPALPPGIPPPQFPGFP. Residues 87-164 enclose the RRM domain; sequence TTVFVGNISE…KKLLVKVDAK (78 aa). The residue at position 135 (K135) is an N6-acetyllysine. 2 disordered regions span residues 173–201 and 220–242; these read KAKKKANGNARPETVTNDDEEALDEETKR and ELNAPSQESDSHPRKKKKEKKED. Phosphoserine is present on residues S225 and S228. Residues K260, K272, and K425 each participate in a glycyl lysine isopeptide (Lys-Gly) (interchain with G-Cter in SUMO2) cross-link. Composition is skewed to basic and acidic residues over residues 282–428 and 516–568; these read KFRD…KRDR and RLRD…ERRR. Disordered stretches follow at residues 282 to 437 and 493 to 683; these read KFRD…DAYE and EFLE…KRKK. Positions 284-639 are necessary for nuclear speckle localization; that stretch reads RDTHKKLEEE…PNTPGDESPC (356 aa). K573 participates in a covalent cross-link: Glycyl lysine isopeptide (Lys-Gly) (interchain with G-Cter in SUMO2). Position 578 is a phosphoserine (S578). Basic and acidic residues predominate over residues 585–594; the sequence is KQEKEEKREE. Low complexity predominate over residues 616-625; the sequence is SSAPSVSSAS. Residue K666 forms a Glycyl lysine isopeptide (Lys-Gly) (interchain with G-Cter in SUMO2) linkage. Residues 669–678 are compositionally biased toward polar residues; it reads ASNSPGQPNS. S672 and S678 each carry phosphoserine. Residues K683 and K692 each participate in a glycyl lysine isopeptide (Lys-Gly) (interchain with G-Cter in SUMO2) cross-link. Phosphoserine is present on S698. A Glycyl lysine isopeptide (Lys-Gly) (interchain with G-Cter in SUMO2) cross-link involves residue K717. A PWI domain is found at 745–838; sequence PELFAYPLDW…TEAKKIGLVK (94 aa).

In terms of assembly, interacts with LUC7L3 and SRRM1. Specifically associates with functional splicing complexes, including Sm proteins and U1, U2, U4, U5 and U6 snRNAs. Associates with exon junction complex (EJC) proteins, including APEX1, DDX39B, NCBP1, RBM8A and RNPS1. Interaction with NCBP1 is RNA-dependent. Post-translationally, sumoylated.

The protein resides in the nucleus speckle. Its subcellular location is the cytoplasm. In terms of biological role, RNA-binding protein that acts as a regulator of alternative pre-mRNA splicing. Involved in apoptotic cell death through the regulation of the apoptotic factor BCL2L1 isoform expression. Modulates the ratio of proapoptotic BCL2L1 isoform S to antiapoptotic BCL2L1 isoform L mRNA expression. When overexpressed, stimulates proapoptotic BCL2L1 isoform S 5'-splice site (5'-ss) selection, whereas its depletion caused the accumulation of antiapoptotic BCL2L1 isoform L. Promotes BCL2L1 isoform S 5'-ss usage through the 5'-CGGGCA-3' RNA sequence. Its association with LUC7L3 promotes U1 snRNP binding to a weak 5' ss in a 5'-CGGGCA-3'-dependent manner. Binds to the exonic splicing enhancer 5'-CGGGCA-3' RNA sequence located within exon 2 of the BCL2L1 pre-mRNA. This chain is RNA-binding protein 25 (Rbm25), found in Mus musculus (Mouse).